The primary structure comprises 169 residues: Peptide deformylase 1 (169 aa).

Residues Cys93 and His135 each coordinate Fe cation. Residue Glu136 is part of the active site. His139 contacts Fe cation.

Belongs to the polypeptide deformylase family. It depends on Fe(2+) as a cofactor.

The catalysed reaction is N-terminal N-formyl-L-methionyl-[peptide] + H2O = N-terminal L-methionyl-[peptide] + formate. Its function is as follows. Removes the formyl group from the N-terminal Met of newly synthesized proteins. Requires at least a dipeptide for an efficient rate of reaction. N-terminal L-methionine is a prerequisite for activity but the enzyme has broad specificity at other positions. The chain is Peptide deformylase 1 from Corynebacterium efficiens (strain DSM 44549 / YS-314 / AJ 12310 / JCM 11189 / NBRC 100395).